A 360-amino-acid chain; its full sequence is WAT1-related protein At3g28070 (360 aa).

The next 10 membrane-spanning stretches (helical) occupy residues 15–35 (AVFLTAMLVVETSVVGISTLF), 45–65 (IYPFLGYSYLLASLLLLPSLF), 84–104 (IGLLGFLGSMYVITGYIGIEY), 108–128 (TLASAINNITPALTFILAIIF), 140–160 (SLAKLMGTILSLIGALVVIFY), 190–210 (WLIGGALLTMQGIFVSVSFIL), 224–244 (VSFLYTVCVSIVTSTIGLVVE), 248–268 (PSVWIIHFDITLITIVTMAIV), 286–306 (LYLAIFKPLSILIAVVMGAIF), and 311–331 (LYLGCLIGGILITLGFYAVMW). In terms of domain architecture, EamA spans 30–158 (GISTLFKFAT…LSLIGALVVI (129 aa)).

The protein belongs to the drug/metabolite transporter (DMT) superfamily. Plant drug/metabolite exporter (P-DME) (TC 2.A.7.4) family.

Its subcellular location is the membrane. The sequence is that of WAT1-related protein At3g28070 from Arabidopsis thaliana (Mouse-ear cress).